We begin with the raw amino-acid sequence, 507 residues long: TOM1-like protein 2 (507 aa).

Positions 20-152 (ATDGSLQSED…ELKRKGVEFP (133 aa)) constitute a VHS domain. Phosphoserine is present on Ser160. Residues 162 to 210 (IHTPQRSVPEVDPAATMPRSQSQQRTSAGSYSSPPPAPYSAPQAPALSV) are disordered. Residue Thr164 is modified to Phosphothreonine. A GAT domain is found at 219–307 (EQIARLRSEL…VFLRYERFER (89 aa)). Positions 329 to 334 (NLIDLG) match the Clathrin-binding motif. A disordered region spans residues 467 to 507 (RAKAAEMVPDLPSPPMEAPAPASNPSGRKKPERSEDALFAL). The span at 498–507 (ERSEDALFAL) shows a compositional bias: basic and acidic residues.

The protein belongs to the TOM1 family. As to quaternary structure, interacts with clathrin, SRC and TOLLIP. Interacts with MYO6. Ubiquitously expressed with higher expression in heart and skeletal muscle.

In terms of biological role, acts as a MYO6/Myosin VI adapter protein that targets myosin VI to endocytic structures. May also play a role in recruiting clathrin to endosomes. May regulate growth factor-induced mitogenic signaling. The chain is TOM1-like protein 2 (TOM1L2) from Homo sapiens (Human).